Reading from the N-terminus, the 267-residue chain is MKEKLTKALQALKHKTPLVHAITNVVTVNDCANSLLAVGASPAMCEAADEVFEFSQLAGSLYLNLGTLTKEQEMAAYLAIRGATLKGIPVILDPVACGAIPRKKATIERLGHFGRFTVIKGNLGEVKALAGLAARVRGVDSLDEGNDGLEACQSLARAYGCVVAATGKVDIVADGQRACLIENGTEMLTRITGAGCMAGALVAGFCGAYEDAFGATVAALLTMSLAGELAQETSGGELPGTFRAHLIDQLSLVDEALIEKRGRVQWL.

Met44 contributes to the substrate binding site. Residues Lys120 and Thr166 each contribute to the ATP site. Gly193 provides a ligand contact to substrate.

Belongs to the Thz kinase family. The cofactor is Mg(2+).

The enzyme catalyses 5-(2-hydroxyethyl)-4-methylthiazole + ATP = 4-methyl-5-(2-phosphooxyethyl)-thiazole + ADP + H(+). The protein operates within cofactor biosynthesis; thiamine diphosphate biosynthesis; 4-methyl-5-(2-phosphoethyl)-thiazole from 5-(2-hydroxyethyl)-4-methylthiazole: step 1/1. Catalyzes the phosphorylation of the hydroxyl group of 4-methyl-5-beta-hydroxyethylthiazole (THZ). This chain is Hydroxyethylthiazole kinase, found in Desulfitobacterium hafniense (strain DSM 10664 / DCB-2).